Here is a 274-residue protein sequence, read N- to C-terminus: MLSVAARSGPFAPVLSATSRGVAGALRPLVQATVPATPEQPVLDLKRPFLSRESLSGQAVRRPLVASVGLNVPASVCYSHTDIKVPDFSEYRRLEVLDSTKSSRESSEARKGFSYLVTGVTTVGVAYAAKNAVTQFVSSMSASADVLALAKIEIKLSDIPEGKNMAFKWRGKPLFVRHRTQKEIEQEAAVELSQLRDPQHDLDRVKKPEWVILIGVCTHLGCVPIANAGDFGGYYCPCHGSHYDASGRIRLGPAPLNLEVPTYEFTSDDMVIVG.

The Mitochondrial matrix portion of the chain corresponds to 79 to 103; that stretch reads SHTDIKVPDFSEYRRLEVLDSTKSS. A helical transmembrane segment spans residues 104-140; that stretch reads RESSEARKGFSYLVTGVTTVGVAYAAKNAVTQFVSSM. Over 141–274 the chain is Mitochondrial intermembrane; it reads SASADVLALA…FTSDDMVIVG (134 aa). The 86-residue stretch at 187 to 272 folds into the Rieske domain; sequence EAAVELSQLR…YEFTSDDMVI (86 aa). [2Fe-2S] cluster-binding residues include C217, H219, C236, H239, and S241. Cysteines 222 and 238 form a disulfide.

The protein belongs to the Rieske iron-sulfur protein family. As to quaternary structure, component of the ubiquinol-cytochrome c oxidoreductase (cytochrome b-c1 complex, complex III, CIII), a multisubunit enzyme composed of 11 subunits. The complex is composed of 3 respiratory subunits cytochrome b, cytochrome c1 and Rieske protein UQCRFS1, 2 core protein subunits UQCRC1/QCR1 and UQCRC2/QCR2, and 6 low-molecular weight protein subunits UQCRH/QCR6, UQCRB/QCR7, UQCRQ/QCR8, UQCR10/QCR9, UQCR11/QCR10 and subunit 9, the cleavage product of Rieske protein UQCRFS1. The complex exists as an obligatory dimer and forms supercomplexes (SCs) in the inner mitochondrial membrane with NADH-ubiquinone oxidoreductase (complex I, CI) and cytochrome c oxidase (complex IV, CIV), resulting in different assemblies (supercomplex SCI(1)III(2)IV(1) and megacomplex MCI(2)III(2)IV(2)). Incorporation of the Rieske protein UQCRFS1 is the penultimate step in complex III assembly. Interacts with TTC19, which is involved in the clearance of UQCRFS1 fragments. Component of the ubiquinol-cytochrome c oxidoreductase (cytochrome b-c1 complex, complex III, CIII). Subunit 9 corresponds to the mitochondrial targeting sequence (MTS) of Rieske protein UQCRFS1. It is retained after processing and incorporated inside complex III, where it remains bound to the complex and localizes between the 2 core subunits UQCRC1/QCR1 and UQCRC2/QCR2. It depends on [2Fe-2S] cluster as a cofactor. In terms of processing, proteolytic processing is necessary for the correct insertion of UQCRFS1 in the complex III dimer. Several fragments are generated during UQCRFS1 insertion, most probably due to the endogenous matrix-processing peptidase (MPP) activity of the 2 core protein subunits UQCRC1/QCR1 and UQCRC2/QCR2, which are homologous to the 2 mitochondrial-processing peptidase (MPP) subunits beta-MPP and alpha-MPP respectively. The action of the protease is also necessary for the clearance of the UQCRFS1 fragments.

It localises to the mitochondrion inner membrane. It carries out the reaction a quinol + 2 Fe(III)-[cytochrome c](out) = a quinone + 2 Fe(II)-[cytochrome c](out) + 2 H(+)(out). Component of the ubiquinol-cytochrome c oxidoreductase, a multisubunit transmembrane complex that is part of the mitochondrial electron transport chain which drives oxidative phosphorylation. The respiratory chain contains 3 multisubunit complexes succinate dehydrogenase (complex II, CII), ubiquinol-cytochrome c oxidoreductase (cytochrome b-c1 complex, complex III, CIII) and cytochrome c oxidase (complex IV, CIV), that cooperate to transfer electrons derived from NADH and succinate to molecular oxygen, creating an electrochemical gradient over the inner membrane that drives transmembrane transport and the ATP synthase. The cytochrome b-c1 complex catalyzes electron transfer from ubiquinol to cytochrome c, linking this redox reaction to translocation of protons across the mitochondrial inner membrane, with protons being carried across the membrane as hydrogens on the quinol. In the process called Q cycle, 2 protons are consumed from the matrix, 4 protons are released into the intermembrane space and 2 electrons are passed to cytochrome c. The Rieske protein is a catalytic core subunit containing a [2Fe-2S] iron-sulfur cluster. It cycles between 2 conformational states during catalysis to transfer electrons from the quinol bound in the Q(0) site in cytochrome b to cytochrome c1. Incorporation of UQCRFS1 is the penultimate step in complex III assembly. In terms of biological role, component of the ubiquinol-cytochrome c oxidoreductase (cytochrome b-c1 complex, complex III, CIII). UQCRFS1 undergoes proteolytic processing once it is incorporated in the complex III dimer. One of the fragments, called subunit 9, corresponds to its mitochondrial targeting sequence (MTS). The proteolytic processing is necessary for the correct insertion of UQCRFS1 in the complex III dimer, but the persistence of UQCRFS1-derived fragments may prevent newly imported UQCRFS1 to be processed and assembled into complex III and is detrimental for the complex III structure and function. The protein is Cytochrome b-c1 complex subunit Rieske, mitochondrial (UQCRFS1) of Gorilla gorilla gorilla (Western lowland gorilla).